The chain runs to 159 residues: Phosphopantetheine adenylyltransferase (159 aa).

Threonine 10 contacts substrate. Residues 10–11 (TF) and histidine 18 contribute to the ATP site. Residues lysine 42, methionine 74, and arginine 88 each contribute to the substrate site. Residues 89-91 (GLR), glutamate 99, and 124-130 (WSFISSS) contribute to the ATP site.

Belongs to the bacterial CoaD family. Homohexamer. Mg(2+) is required as a cofactor.

It is found in the cytoplasm. It catalyses the reaction (R)-4'-phosphopantetheine + ATP + H(+) = 3'-dephospho-CoA + diphosphate. The protein operates within cofactor biosynthesis; coenzyme A biosynthesis; CoA from (R)-pantothenate: step 4/5. Its function is as follows. Reversibly transfers an adenylyl group from ATP to 4'-phosphopantetheine, yielding dephospho-CoA (dPCoA) and pyrophosphate. The protein is Phosphopantetheine adenylyltransferase of Yersinia pestis.